The following is a 599-amino-acid chain: Aspartate--tRNA(Asp/Asn) ligase (599 aa).

E174 is a binding site for L-aspartate. Residues 198–201 form an aspartate region; it reads QLFK. Residue R220 coordinates L-aspartate. ATP contacts are provided by residues 220-222 and Q229; that span reads RDE. H457 is a binding site for L-aspartate. Residue E491 coordinates ATP. R498 is a binding site for L-aspartate. 543-546 lines the ATP pocket; sequence GLDR.

This sequence belongs to the class-II aminoacyl-tRNA synthetase family. Type 1 subfamily. Homodimer.

The protein resides in the cytoplasm. It carries out the reaction tRNA(Asx) + L-aspartate + ATP = L-aspartyl-tRNA(Asx) + AMP + diphosphate. In terms of biological role, aspartyl-tRNA synthetase with relaxed tRNA specificity since it is able to aspartylate not only its cognate tRNA(Asp) but also tRNA(Asn). Reaction proceeds in two steps: L-aspartate is first activated by ATP to form Asp-AMP and then transferred to the acceptor end of tRNA(Asp/Asn). The sequence is that of Aspartate--tRNA(Asp/Asn) ligase from Paraburkholderia phytofirmans (strain DSM 17436 / LMG 22146 / PsJN) (Burkholderia phytofirmans).